A 379-amino-acid chain; its full sequence is tRNA-specific 2-thiouridylase MnmA (379 aa).

Residues 23-30 (AMSGGVDS) and L49 contribute to the ATP site. Residue C117 is the Nucleophile of the active site. The cysteines at positions 117 and 214 are disulfide-linked. G141 lines the ATP pocket. Residues 163 to 165 (RDQ) form an interaction with tRNA region. Residue C214 is the Cysteine persulfide intermediate of the active site.

It belongs to the MnmA/TRMU family.

It is found in the cytoplasm. The enzyme catalyses S-sulfanyl-L-cysteinyl-[protein] + uridine(34) in tRNA + AH2 + ATP = 2-thiouridine(34) in tRNA + L-cysteinyl-[protein] + A + AMP + diphosphate + H(+). Functionally, catalyzes the 2-thiolation of uridine at the wobble position (U34) of tRNA, leading to the formation of s(2)U34. The sequence is that of tRNA-specific 2-thiouridylase MnmA from Cereibacter sphaeroides (strain ATCC 17029 / ATH 2.4.9) (Rhodobacter sphaeroides).